The sequence spans 478 residues: Glutamyl-tRNA(Gln) amidotransferase subunit A (478 aa).

Active-site charge relay system residues include lysine 72 and serine 147. The Acyl-ester intermediate role is filled by serine 171.

It belongs to the amidase family. GatA subfamily. In terms of assembly, heterotrimer of A, B and C subunits.

The catalysed reaction is L-glutamyl-tRNA(Gln) + L-glutamine + ATP + H2O = L-glutaminyl-tRNA(Gln) + L-glutamate + ADP + phosphate + H(+). Its function is as follows. Allows the formation of correctly charged Gln-tRNA(Gln) through the transamidation of misacylated Glu-tRNA(Gln) in organisms which lack glutaminyl-tRNA synthetase. The reaction takes place in the presence of glutamine and ATP through an activated gamma-phospho-Glu-tRNA(Gln). The protein is Glutamyl-tRNA(Gln) amidotransferase subunit A of Saccharolobus solfataricus (strain ATCC 35092 / DSM 1617 / JCM 11322 / P2) (Sulfolobus solfataricus).